The following is a 249-amino-acid chain: 5'-nucleotidase SurE (249 aa).

A divalent metal cation-binding residues include Asp9, Asp10, Ser40, and Asn92.

This sequence belongs to the SurE nucleotidase family. Requires a divalent metal cation as cofactor.

It localises to the cytoplasm. It carries out the reaction a ribonucleoside 5'-phosphate + H2O = a ribonucleoside + phosphate. Its function is as follows. Nucleotidase that shows phosphatase activity on nucleoside 5'-monophosphates. The chain is 5'-nucleotidase SurE from Shewanella loihica (strain ATCC BAA-1088 / PV-4).